A 352-amino-acid polypeptide reads, in one-letter code: Ion-translocating oxidoreductase complex subunit D (352 aa).

4 helical membrane passes run Ile20–Gly40, Gly42–Leu62, Ile89–Ala109, and Pro123–Leu143. Position 187 is an FMN phosphoryl threonine (Thr187). Transmembrane regions (helical) follow at residues Ile214–Leu234, Trp242–Phe262, Leu267–Leu287, Leu301–Pro321, and Asp322–Thr342.

This sequence belongs to the NqrB/RnfD family. As to quaternary structure, the complex is composed of six subunits: RsxA, RsxB, RsxC, RsxD, RsxE and RsxG. It depends on FMN as a cofactor.

It is found in the cell inner membrane. In terms of biological role, part of a membrane-bound complex that couples electron transfer with translocation of ions across the membrane. Required to maintain the reduced state of SoxR. The polypeptide is Ion-translocating oxidoreductase complex subunit D (Shigella boydii serotype 18 (strain CDC 3083-94 / BS512)).